We begin with the raw amino-acid sequence, 164 residues long: MKTIEEINQLNVKKILSEKKIPDFFPGDVIKVGVRITEGKKDRIQYFEGVCIARKNRDINSSFTVRKISFGEGVERTFPLYGTVIDTITVIRHGKVRRAKLYYLRDRTGKSARIAEKIRKKIGIEVDVKPEMVTEETLAPVAAEAEKQTEVQAEPKIEKSEEKK.

The tract at residues 144 to 164 (EAEKQTEVQAEPKIEKSEEKK) is disordered.

Belongs to the bacterial ribosomal protein bL19 family.

This protein is located at the 30S-50S ribosomal subunit interface and may play a role in the structure and function of the aminoacyl-tRNA binding site. The protein is Large ribosomal subunit protein bL19 of Pelagibacter ubique (strain HTCC1062).